The following is a 426-amino-acid chain: Probable glucose-6-phosphate isomerase (426 aa).

Residue Glu-272 is the Proton donor of the active site. Active-site residues include His-293 and Lys-404.

Belongs to the GPI family.

The protein localises to the cytoplasm. The enzyme catalyses alpha-D-glucose 6-phosphate = beta-D-fructose 6-phosphate. It participates in carbohydrate biosynthesis; gluconeogenesis. It functions in the pathway carbohydrate degradation; glycolysis; D-glyceraldehyde 3-phosphate and glycerone phosphate from D-glucose: step 2/4. In terms of biological role, catalyzes the reversible isomerization of glucose-6-phosphate to fructose-6-phosphate. The sequence is that of Probable glucose-6-phosphate isomerase from Halobacterium salinarum (strain ATCC 700922 / JCM 11081 / NRC-1) (Halobacterium halobium).